Reading from the N-terminus, the 896-residue chain is Alanine--tRNA ligase (896 aa).

Residues 439-456 (QRAKDDAKAKKGQHRDAS) are compositionally biased toward basic and acidic residues. Positions 439–459 (QRAKDDAKAKKGQHRDASAYR) are disordered. Residues His-579, His-583, Cys-681, and His-685 each coordinate Zn(2+).

This sequence belongs to the class-II aminoacyl-tRNA synthetase family. It depends on Zn(2+) as a cofactor.

It is found in the cytoplasm. It carries out the reaction tRNA(Ala) + L-alanine + ATP = L-alanyl-tRNA(Ala) + AMP + diphosphate. Functionally, catalyzes the attachment of alanine to tRNA(Ala) in a two-step reaction: alanine is first activated by ATP to form Ala-AMP and then transferred to the acceptor end of tRNA(Ala). Also edits incorrectly charged Ser-tRNA(Ala) and Gly-tRNA(Ala) via its editing domain. This is Alanine--tRNA ligase from Nocardioides sp. (strain ATCC BAA-499 / JS614).